We begin with the raw amino-acid sequence, 503 residues long: Cardiolipin synthase (503 aa).

3 helical membrane passes run leucine 5–leucine 25, valine 30–phenylalanine 50, and leucine 59–phenylalanine 79. PLD phosphodiesterase domains lie at isoleucine 238–tyrosine 265 and asparagine 416–serine 443. Residues histidine 243, lysine 245, aspartate 250, histidine 421, lysine 423, and aspartate 428 contribute to the active site.

The protein belongs to the phospholipase D family. Cardiolipin synthase subfamily.

The protein localises to the cell membrane. The catalysed reaction is 2 a 1,2-diacyl-sn-glycero-3-phospho-(1'-sn-glycerol) = a cardiolipin + glycerol. Catalyzes the reversible phosphatidyl group transfer from one phosphatidylglycerol molecule to another to form cardiolipin (CL) (diphosphatidylglycerol) and glycerol. This chain is Cardiolipin synthase (cls), found in Alkalihalophilus pseudofirmus (strain ATCC BAA-2126 / JCM 17055 / OF4) (Bacillus pseudofirmus).